We begin with the raw amino-acid sequence, 152 residues long: D-aminoacyl-tRNA deacylase (152 aa).

Positions 142–143 match the Gly-cisPro motif, important for rejection of L-amino acids motif; that stretch reads GP.

It belongs to the DTD family. Homodimer.

The protein localises to the cytoplasm. The enzyme catalyses glycyl-tRNA(Ala) + H2O = tRNA(Ala) + glycine + H(+). It catalyses the reaction a D-aminoacyl-tRNA + H2O = a tRNA + a D-alpha-amino acid + H(+). An aminoacyl-tRNA editing enzyme that deacylates mischarged D-aminoacyl-tRNAs. Also deacylates mischarged glycyl-tRNA(Ala), protecting cells against glycine mischarging by AlaRS. Acts via tRNA-based rather than protein-based catalysis; rejects L-amino acids rather than detecting D-amino acids in the active site. By recycling D-aminoacyl-tRNA to D-amino acids and free tRNA molecules, this enzyme counteracts the toxicity associated with the formation of D-aminoacyl-tRNA entities in vivo and helps enforce protein L-homochirality. This chain is D-aminoacyl-tRNA deacylase, found in Burkholderia lata (strain ATCC 17760 / DSM 23089 / LMG 22485 / NCIMB 9086 / R18194 / 383).